The chain runs to 491 residues: Cytochrome P450 2H1 (491 aa).

Position 436 (Cys436) interacts with heme.

Belongs to the cytochrome P450 family. The cofactor is heme. As to expression, expressed in liver.

It is found in the endoplasmic reticulum membrane. It localises to the microsome membrane. It carries out the reaction an organic molecule + reduced [NADPH--hemoprotein reductase] + O2 = an alcohol + oxidized [NADPH--hemoprotein reductase] + H2O + H(+). Functionally, cytochromes P450 are a group of heme-thiolate monooxygenases. In liver microsomes, this enzyme is involved in an NADPH-dependent electron transport pathway. It oxidizes a variety of structurally unrelated compounds, including steroids, fatty acids, and xenobiotics. The protein is Cytochrome P450 2H1 (CYP2H1) of Gallus gallus (Chicken).